We begin with the raw amino-acid sequence, 172 residues long: Crossover junction endodeoxyribonuclease RuvC (172 aa).

Residues D11, E71, and D143 contribute to the active site. Positions 11, 71, and 143 each coordinate Mg(2+).

This sequence belongs to the RuvC family. In terms of assembly, homodimer which binds Holliday junction (HJ) DNA. The HJ becomes 2-fold symmetrical on binding to RuvC with unstacked arms; it has a different conformation from HJ DNA in complex with RuvA. In the full resolvosome a probable DNA-RuvA(4)-RuvB(12)-RuvC(2) complex forms which resolves the HJ. Requires Mg(2+) as cofactor.

It is found in the cytoplasm. The catalysed reaction is Endonucleolytic cleavage at a junction such as a reciprocal single-stranded crossover between two homologous DNA duplexes (Holliday junction).. Its function is as follows. The RuvA-RuvB-RuvC complex processes Holliday junction (HJ) DNA during genetic recombination and DNA repair. Endonuclease that resolves HJ intermediates. Cleaves cruciform DNA by making single-stranded nicks across the HJ at symmetrical positions within the homologous arms, yielding a 5'-phosphate and a 3'-hydroxyl group; requires a central core of homology in the junction. The consensus cleavage sequence is 5'-(A/T)TT(C/G)-3'. Cleavage occurs on the 3'-side of the TT dinucleotide at the point of strand exchange. HJ branch migration catalyzed by RuvA-RuvB allows RuvC to scan DNA until it finds its consensus sequence, where it cleaves and resolves the cruciform DNA. The sequence is that of Crossover junction endodeoxyribonuclease RuvC from Brucella anthropi (strain ATCC 49188 / DSM 6882 / CCUG 24695 / JCM 21032 / LMG 3331 / NBRC 15819 / NCTC 12168 / Alc 37) (Ochrobactrum anthropi).